A 647-amino-acid chain; its full sequence is Chaperone protein DnaK (647 aa).

Threonine 198 carries the phosphothreonine; by autocatalysis modification. Positions glycine 606–valine 634 are disordered. Residues asparagine 615–asparagine 628 show a composition bias toward polar residues.

It belongs to the heat shock protein 70 family.

Functionally, acts as a chaperone. This Psychrobacter cryohalolentis (strain ATCC BAA-1226 / DSM 17306 / VKM B-2378 / K5) protein is Chaperone protein DnaK.